The primary structure comprises 969 residues: Proprotein convertase subtilisin/kexin type 6 (969 aa).

The segment covering 1-16 (MPPRAPPAPGPRPPPR) has biased composition (pro residues). Residues 1–39 (MPPRAPPAPGPRPPPRAAAATDTAAGAGGAGGAGGAGGP) are disordered. An N-terminal signal peptide occupies residues 1-63 (MPPRAPPAPG…LLALPAACSA (63 aa)). A compositionally biased stretch (gly residues) spans 26 to 39 (GAGGAGGAGGAGGP). A propeptide spanning residues 64 to 149 (PPPRPVYTNH…QQEVKRRVKR (86 aa)) is cleaved from the precursor. One can recognise a Peptidase S8 domain in the interval 168–487 (MWYLHCGDKN…FGLVDAEALV (320 aa)). Residues aspartate 205 and histidine 246 each act as charge relay system in the active site. A glycan (N-linked (GlcNAc...) asparagine) is linked at asparagine 259. The Charge relay system role is filled by serine 420. One can recognise a P/Homo B domain in the interval 495 to 635 (AVPSQHMCVA…SLILYGTAEH (141 aa)). The Cell attachment site signature appears at 553–555 (RGD). Positions 658-683 (EPPKAALSPSQVEVPEDEEDYTAQST) are disordered. FU repeat units follow at residues 692-739 (TSVC…GYFG), 743-790 (ARRC…GFYA), 794-838 (QKNC…GTYF), 842-887 (LIRC…GFYP), and 895-943 (HKVC…ETFC). A CRM (Cys-rich motif) region spans residues 695-930 (CHPECGDKGC…GFTQLGTSCI (236 aa)). N-linked (GlcNAc...) asparagine glycans are attached at residues asparagine 914 and asparagine 932. The PLAC domain occupies 931–969 (TNHTCSNADETFCEMVKSNRLCERKLFIQFCCRTCLLAG).

This sequence belongs to the peptidase S8 family. The PACE4A-I precursor protein seems to exist in the reticulum endoplasmic as both a monomer and a dimer-sized complex whereas mature PACE4A-I exists only as a monomer, suggesting that propeptide cleavage affects its tertiary or quaternary structure. Interacts (immature form including the propeptide) with RCN3; probably involved in the maturation and the secretion of PCSK6. It depends on Ca(2+) as a cofactor. As to expression, each PACE4 isoform exhibits a unique restricted distribution. Isoform PACE4A-I is expressed in heart, brain, placenta, lung, skeletal muscle, kidney, pancreas, but at comparatively higher levels in the liver. Isoform PACE4A-II is at least expressed in placenta. Isoform PACE4B was only found in the embryonic kidney cell line from which it was isolated. Isoform PACE4C and isoform PACE4D are expressed in placenta. Isoform PACE4E-I is expressed in cerebellum, placenta and pituitary. Isoform PACE4E-II is at least present in cerebellum.

It is found in the secreted. It localises to the endoplasmic reticulum. The protein localises to the endomembrane system. Serine endoprotease that processes various proproteins by cleavage at paired basic amino acids, recognizing the RXXX[KR]R consensus motif. Likely functions in the constitutive secretory pathway, with unique restricted distribution in both neuroendocrine and non-neuroendocrine tissues. This chain is Proprotein convertase subtilisin/kexin type 6 (PCSK6), found in Homo sapiens (Human).